The primary structure comprises 510 residues: 2,3-bisphosphoglycerate-independent phosphoglycerate mutase (510 aa).

Asp16 and Ser66 together coordinate Mn(2+). The active-site Phosphoserine intermediate is Ser66. Substrate is bound by residues His127, 156–157, Arg186, Arg192, 257–260, and Lys333; these read RD and RADR. Residues Asp400, His404, Asp441, His442, and His460 each contribute to the Mn(2+) site.

This sequence belongs to the BPG-independent phosphoglycerate mutase family. Monomer. Mn(2+) is required as a cofactor.

It catalyses the reaction (2R)-2-phosphoglycerate = (2R)-3-phosphoglycerate. The protein operates within carbohydrate degradation; glycolysis; pyruvate from D-glyceraldehyde 3-phosphate: step 3/5. Its function is as follows. Catalyzes the interconversion of 2-phosphoglycerate and 3-phosphoglycerate. In Gluconobacter oxydans (strain 621H) (Gluconobacter suboxydans), this protein is 2,3-bisphosphoglycerate-independent phosphoglycerate mutase.